Consider the following 157-residue polypeptide: WPP domain-containing protein 3 (157 aa).

Residues 1 to 20 (MAETADTINTTVSTPQPQLE) show a composition bias toward polar residues. Residues 1–41 (MAETADTINTTVSTPQPQLESRSDETSCLQKHRSDATSEVT) are disordered. The span at 32–41 (HRSDATSEVT) shows a compositional bias: basic and acidic residues. The tract at residues 37-138 (TSEVTKEEKS…IESAEVRFKA (102 aa)) is WPP; degenerate.

In terms of tissue distribution, expressed in roots, stems and leaves.

The protein localises to the cytoplasm. The protein resides in the nucleus. Functionally, regulates the mitotic activity in roots. The sequence is that of WPP domain-containing protein 3 (WPP3) from Arabidopsis thaliana (Mouse-ear cress).